Reading from the N-terminus, the 215-residue chain is N-(5'-phosphoribosyl)anthranilate isomerase (215 aa).

This sequence belongs to the TrpF family.

The enzyme catalyses N-(5-phospho-beta-D-ribosyl)anthranilate = 1-(2-carboxyphenylamino)-1-deoxy-D-ribulose 5-phosphate. It functions in the pathway amino-acid biosynthesis; L-tryptophan biosynthesis; L-tryptophan from chorismate: step 3/5. In Paramagnetospirillum magneticum (strain ATCC 700264 / AMB-1) (Magnetospirillum magneticum), this protein is N-(5'-phosphoribosyl)anthranilate isomerase.